Reading from the N-terminus, the 255-residue chain is 1-(5-phosphoribosyl)-5-[(5-phosphoribosylamino)methylideneamino] imidazole-4-carboxamide isomerase (255 aa).

The active-site Proton acceptor is aspartate 8. Aspartate 129 (proton donor) is an active-site residue.

The protein belongs to the HisA/HisF family.

The protein localises to the cytoplasm. The catalysed reaction is 1-(5-phospho-beta-D-ribosyl)-5-[(5-phospho-beta-D-ribosylamino)methylideneamino]imidazole-4-carboxamide = 5-[(5-phospho-1-deoxy-D-ribulos-1-ylimino)methylamino]-1-(5-phospho-beta-D-ribosyl)imidazole-4-carboxamide. It participates in amino-acid biosynthesis; L-histidine biosynthesis; L-histidine from 5-phospho-alpha-D-ribose 1-diphosphate: step 4/9. This is 1-(5-phosphoribosyl)-5-[(5-phosphoribosylamino)methylideneamino] imidazole-4-carboxamide isomerase from Synechococcus sp. (strain CC9902).